The primary structure comprises 317 residues: Pseudouridine-5'-phosphate glycosidase 1 (317 aa).

Catalysis depends on Glu-40, which acts as the Proton donor. Residues Lys-101 and Val-121 each contribute to the substrate site. Asp-153 lines the Mn(2+) pocket. Residue 155 to 157 participates in substrate binding; that stretch reads SAD. Lys-174 acts as the Nucleophile in catalysis.

Belongs to the pseudouridine-5'-phosphate glycosidase family. In terms of assembly, homotrimer. Requires Mn(2+) as cofactor.

The enzyme catalyses D-ribose 5-phosphate + uracil = psi-UMP + H2O. Catalyzes the reversible cleavage of pseudouridine 5'-phosphate (PsiMP) to ribose 5-phosphate and uracil. Functions biologically in the cleavage direction, as part of a pseudouridine degradation pathway. The sequence is that of Pseudouridine-5'-phosphate glycosidase 1 from Rhizobium johnstonii (strain DSM 114642 / LMG 32736 / 3841) (Rhizobium leguminosarum bv. viciae).